A 241-amino-acid chain; its full sequence is DnaA regulatory inactivator Hda (241 aa).

Belongs to the DnaA family. HdA subfamily. The active form seems to be an ADP-bound monomer. Forms the RIDA complex (regulatory inactivation of DnaA) of ATP-DnaA, ADP-Hda and the DNA-loaded beta sliding clamp (dnaN).

Its function is as follows. Mediates the interaction of DNA replication initiator protein DnaA with DNA polymerase subunit beta sliding clamp (dnaN). Stimulates hydrolysis of ATP-DnaA to ADP-DnaA, rendering DnaA inactive for reinitiation, a process called regulatory inhibition of DnaA or RIDA. The polypeptide is DnaA regulatory inactivator Hda (Salmonella arizonae (strain ATCC BAA-731 / CDC346-86 / RSK2980)).